A 413-amino-acid polypeptide reads, in one-letter code: Multifunctional CCA protein (413 aa).

ATP-binding residues include G8 and R11. Positions 8 and 11 each coordinate CTP. Mg(2+) contacts are provided by D21 and D23. R91, R143, and R146 together coordinate ATP. CTP contacts are provided by R91, R143, and R146. One can recognise an HD domain in the interval 232-333 (TGVHVMMVID…VRLLERADAL (102 aa)).

The protein belongs to the tRNA nucleotidyltransferase/poly(A) polymerase family. Bacterial CCA-adding enzyme type 1 subfamily. In terms of assembly, monomer. Can also form homodimers and oligomers. Mg(2+) serves as cofactor. The cofactor is Ni(2+).

It catalyses the reaction a tRNA precursor + 2 CTP + ATP = a tRNA with a 3' CCA end + 3 diphosphate. The catalysed reaction is a tRNA with a 3' CCA end + 2 CTP + ATP = a tRNA with a 3' CCACCA end + 3 diphosphate. Catalyzes the addition and repair of the essential 3'-terminal CCA sequence in tRNAs without using a nucleic acid template. Adds these three nucleotides in the order of C, C, and A to the tRNA nucleotide-73, using CTP and ATP as substrates and producing inorganic pyrophosphate. tRNA 3'-terminal CCA addition is required both for tRNA processing and repair. Also involved in tRNA surveillance by mediating tandem CCA addition to generate a CCACCA at the 3' terminus of unstable tRNAs. While stable tRNAs receive only 3'-terminal CCA, unstable tRNAs are marked with CCACCA and rapidly degraded. This Burkholderia mallei (strain NCTC 10247) protein is Multifunctional CCA protein.